A 120-amino-acid chain; its full sequence is Ribosome-binding factor A (120 aa).

Belongs to the RbfA family. As to quaternary structure, monomer. Binds 30S ribosomal subunits, but not 50S ribosomal subunits or 70S ribosomes.

It localises to the cytoplasm. Its function is as follows. One of several proteins that assist in the late maturation steps of the functional core of the 30S ribosomal subunit. Associates with free 30S ribosomal subunits (but not with 30S subunits that are part of 70S ribosomes or polysomes). Required for efficient processing of 16S rRNA. May interact with the 5'-terminal helix region of 16S rRNA. The sequence is that of Ribosome-binding factor A from Clostridium botulinum (strain Okra / Type B1).